A 642-amino-acid chain; its full sequence is Threonine--tRNA ligase (642 aa).

Residues 1–61 (MPIITLPDGS…TADSELAIIT (61 aa)) form the TGS domain. The catalytic stretch occupies residues 243-534 (DHRKIGKQLD…LIEEYAGKFP (292 aa)). Zn(2+) is bound by residues Cys334, His385, and His511.

Belongs to the class-II aminoacyl-tRNA synthetase family. In terms of assembly, homodimer. It depends on Zn(2+) as a cofactor.

The protein localises to the cytoplasm. The enzyme catalyses tRNA(Thr) + L-threonine + ATP = L-threonyl-tRNA(Thr) + AMP + diphosphate + H(+). Functionally, catalyzes the attachment of threonine to tRNA(Thr) in a two-step reaction: L-threonine is first activated by ATP to form Thr-AMP and then transferred to the acceptor end of tRNA(Thr). Also edits incorrectly charged L-seryl-tRNA(Thr). The protein is Threonine--tRNA ligase of Shewanella frigidimarina (strain NCIMB 400).